The chain runs to 336 residues: Atypical chemokine receptor 1 (336 aa).

At 1 to 63 (MGNCLHQAEL…CSLLNDSSLP (63 aa)) the chain is on the extracellular side. N-linked (GlcNAc...) asparagine glycans are attached at residues asparagine 16, asparagine 27, asparagine 33, and asparagine 58. Cystine bridges form between cysteine 51/cysteine 276 and cysteine 129/cysteine 195. Residues 64–84 (FFILASDLGILASSTVLFMLF) form a helical membrane-spanning segment. At 85 to 95 (RPLFRWQLCPG) the chain is on the cytoplasmic side. The helical transmembrane segment at 96-116 (WPVLAQLAVGSALFSIVVPIL) threads the bilayer. Over 117 to 129 (APGLGNTHSSALC) the chain is Extracellular. Residues 130-153 (SLGYCVWYGSAFAQALLLGCHASL) traverse the membrane as a helical segment. Over 154-166 (GPKLGAGQVPGLT) the chain is Cytoplasmic. Residues 167 to 187 (LGLPVGLWGATALLTLPITLA) traverse the membrane as a helical segment. Residues 188 to 207 (SGASDGLCTPIYSTELEALQ) are Extracellular-facing. A helical membrane pass occupies residues 208 to 228 (ATHAVACFAIFVLLPLGLFGA). Over 229–244 (KGLKKALGMGPGPWMN) the chain is Cytoplasmic. The helical transmembrane segment at 245–265 (ILWVWFIFWWPHGLVLGLDFL) threads the bilayer. Over 266-287 (VGSKLSLLPTCLAQQVLDLLLN) the chain is Extracellular. The chain crosses the membrane as a helical span at residues 288 to 308 (LAEALAIVHCVATPLLLALFC). Over 309–336 (HQTTRTLLPSLPLPERWSSPVDTLGSKS) the chain is Cytoplasmic.

This sequence belongs to the G-protein coupled receptor 1 family. Atypical chemokine receptor subfamily.

The protein localises to the early endosome. It localises to the recycling endosome. It is found in the membrane. In terms of biological role, atypical chemokine receptor that controls chemokine levels and localization via high-affinity chemokine binding that is uncoupled from classic ligand-driven signal transduction cascades, resulting instead in chemokine sequestration, degradation, or transcytosis. Also known as interceptor (internalizing receptor) or chemokine-scavenging receptor or chemokine decoy receptor. Has a promiscuous chemokine-binding profile, interacting with inflammatory chemokines of both the CXC and the CC subfamilies but not with homeostatic chemokines. Acts as a receptor for chemokines including CCL2, CCL5, CCL7, CCL11, CCL13, CCL14, CCL17, CXCL5, CXCL6, IL8/CXCL8, CXCL11, GRO, RANTES, MCP-1 and TARC. May regulate chemokine bioavailability and, consequently, leukocyte recruitment through two distinct mechanisms: when expressed in endothelial cells, it sustains the abluminal to luminal transcytosis of tissue-derived chemokines and their subsequent presentation to circulating leukocytes; when expressed in erythrocytes, serves as blood reservoir of cognate chemokines but also as a chemokine sink, buffering potential surges in plasma chemokine levels. This is Atypical chemokine receptor 1 (ACKR1) from Saimiri boliviensis boliviensis (Bolivian squirrel monkey).